A 362-amino-acid polypeptide reads, in one-letter code: Putative sphingolipid delta(4)-desaturase/C4-monooxygenase (362 aa).

The next 3 helical transmembrane spans lie at 45–61 (YVVS…CWLL), 71–91 (LEAY…IHDI), and 107–127 (FFGM…FKKY). The Histidine box-1 signature appears at 89-93 (HDISH). A Histidine box-2 motif is present at residues 128–132 (HVEHH). Helical transmembrane passes span 160 to 177 (LLWL…PLII) and 198 to 218 (LLIL…GTII). Residues 259–263 (HVEHH) carry the Histidine box-3 motif.

It belongs to the fatty acid desaturase type 1 family. DEGS subfamily.

It localises to the membrane. The catalysed reaction is an N-acyl-15-methylhexadecasphinganine + 2 Fe(II)-[cytochrome b5] + O2 + 2 H(+) = an N-acyl-4-hydroxy-15-methylhexadecasphinganine + 2 Fe(III)-[cytochrome b5] + H2O. It catalyses the reaction an N-acyl-15-methylhexadecasphinganine + 2 Fe(II)-[cytochrome b5] + O2 + 2 H(+) = an N-acyl-15-methylhexadecasphing-4-enine + 2 Fe(III)-[cytochrome b5] + 2 H2O. It carries out the reaction a dihydroceramide + 2 Fe(II)-[cytochrome b5] + O2 + 2 H(+) = a phytoceramide + 2 Fe(III)-[cytochrome b5] + H2O. The enzyme catalyses an N-acylsphinganine + 2 Fe(II)-[cytochrome b5] + O2 + 2 H(+) = an N-acylsphing-4-enine + 2 Fe(III)-[cytochrome b5] + 2 H2O. The catalysed reaction is N-octanoylsphinganine + 2 Fe(II)-[cytochrome b5] + O2 + 2 H(+) = N-octanoyl-4-hydroxysphinganine + 2 Fe(III)-[cytochrome b5] + H2O. It catalyses the reaction an N-acylsphinganine + 2 Fe(II)-[cytochrome b5] + O2 + 2 H(+) = an N-acyl-(4R)-4-hydroxysphinganine + 2 Fe(III)-[cytochrome b5] + H2O. It participates in lipid metabolism; sphingolipid metabolism. Functionally, bifunctional enzyme which acts both as a sphingolipid delta(4)-desaturase and a sphingolipid C4-monooxygenase. C.elegans contain specific sphingoid bases, which are unique or different in structure compared to the sphingoid bases found in other animals. Two examples of these distinctive compounds are: 15-methylhexadecasphinganine and 15-methylhexadecasphing-4-enine and this enzyme can catalyze their conversion. The sequence is that of Putative sphingolipid delta(4)-desaturase/C4-monooxygenase (ttm-5) from Caenorhabditis elegans.